Reading from the N-terminus, the 405-residue chain is Cysteine desulfurase IscS (405 aa).

Pyridoxal 5'-phosphate is bound by residues 75–76 (AT), N156, Q184, and 204–206 (SAH). K207 bears the N6-(pyridoxal phosphate)lysine mark. Residue T244 participates in pyridoxal 5'-phosphate binding. C329 acts as the Cysteine persulfide intermediate in catalysis. A [2Fe-2S] cluster-binding site is contributed by C329.

This sequence belongs to the class-V pyridoxal-phosphate-dependent aminotransferase family. NifS/IscS subfamily. In terms of assembly, homodimer. Forms a heterotetramer with IscU, interacts with other sulfur acceptors. Pyridoxal 5'-phosphate is required as a cofactor.

The protein resides in the cytoplasm. It catalyses the reaction (sulfur carrier)-H + L-cysteine = (sulfur carrier)-SH + L-alanine. Its pathway is cofactor biosynthesis; iron-sulfur cluster biosynthesis. Its function is as follows. Master enzyme that delivers sulfur to a number of partners involved in Fe-S cluster assembly, tRNA modification or cofactor biosynthesis. Catalyzes the removal of elemental sulfur atoms from cysteine to produce alanine. Functions as a sulfur delivery protein for Fe-S cluster synthesis onto IscU, an Fe-S scaffold assembly protein, as well as other S acceptor proteins. This chain is Cysteine desulfurase IscS, found in Methylobacillus flagellatus (strain ATCC 51484 / DSM 6875 / VKM B-1610 / KT).